The chain runs to 228 residues: uncharacterized protein (228 aa).

This is an uncharacterized protein from Ictalurid herpesvirus 1 (strain Auburn) (IcHV-1).